Consider the following 408-residue polypeptide: Peptidase T (408 aa).

His-78 contacts Zn(2+). The active site involves Asp-80. Asp-141 lines the Zn(2+) pocket. Residue Glu-175 is the Proton acceptor of the active site. Positions 176, 198, and 380 each coordinate Zn(2+).

The protein belongs to the peptidase M20B family. Requires Zn(2+) as cofactor.

It localises to the cytoplasm. The enzyme catalyses Release of the N-terminal residue from a tripeptide.. In terms of biological role, cleaves the N-terminal amino acid of tripeptides. This chain is Peptidase T, found in Clostridium botulinum (strain Loch Maree / Type A3).